Here is a 70-residue protein sequence, read N- to C-terminus: Large ribosomal subunit protein uL29 (70 aa).

This sequence belongs to the universal ribosomal protein uL29 family.

In Methanocaldococcus jannaschii (strain ATCC 43067 / DSM 2661 / JAL-1 / JCM 10045 / NBRC 100440) (Methanococcus jannaschii), this protein is Large ribosomal subunit protein uL29 (rpl29).